Reading from the N-terminus, the 942-residue chain is Envelope glycoprotein (942 aa).

Positions 1–80 (MDAGASYMRL…LLWTNMCVRA (80 aa)) are cleaved as a signal peptide. 23 N-linked (GlcNAc...) asparagine; by host glycosylation sites follow: N51, N98, N131, N176, N228, N331, N348, N354, N370, N379, N400, N404, N435, N441, N447, N457, N467, N481, N493, N503, N509, N527, and N534. The Extracellular portion of the chain corresponds to 81 to 799 (EDYITLISDP…SLKEVFDWSG (719 aa)). The tract at residues 631-651 (GVGLVIMLVIMAIVAAAGASL) is fusion peptide. 2 coiled-coil regions span residues 663-713 (KAAV…RIML) and 754-789 (RELQ…DVWE). Positions 697–713 (LEARVARVEAITDRIML) are immunosuppression. The helical transmembrane segment at 800 to 820 (WFSWLKYIPIIVVGLVGCILI) threads the bilayer. Topologically, residues 821-942 (RAVICVCQPL…VDCETWGKGD (122 aa)) are cytoplasmic.

In terms of assembly, the mature envelope protein (Env) consists of a trimer of SU-TM heterodimers attached by noncovalent interactions or by a labile interchain disulfide bond. Post-translationally, specific enzymatic cleavages in vivo yield mature proteins. Envelope glycoproteins are synthesized as an inactive precursor that is N-glycosylated and processed likely by host cell furin or by a furin-like protease in the Golgi to yield the mature SU and TM proteins. The cleavage site between SU and TM requires the minimal sequence [KR]-X-[KR]-R.

The protein localises to the virion membrane. Its subcellular location is the host cell membrane. Functionally, the surface protein (SU) attaches the virus to the host cell by binding to its receptor. This interaction triggers the refolding of the transmembrane protein (TM) and is thought to activate its fusogenic potential by unmasking its fusion peptide. Fusion occurs at the host cell plasma membrane. The transmembrane protein (TM) acts as a class I viral fusion protein. Under the current model, the protein has at least 3 conformational states: pre-fusion native state, pre-hairpin intermediate state, and post-fusion hairpin state. During viral and target cell membrane fusion, the coiled coil regions (heptad repeats) assume a trimer-of-hairpins structure, positioning the fusion peptide in close proximity to the C-terminal region of the ectodomain. The formation of this structure appears to drive apposition and subsequent fusion of viral and target cell membranes. Membranes fusion leads to delivery of the nucleocapsid into the cytoplasm. This is Envelope glycoprotein (env) from Caprine arthritis encephalitis virus (strain 63) (CAEV-63).